The primary structure comprises 575 residues: Interleukin-1 receptor-like 2 (575 aa).

The signal sequence occupies residues 1–19; it reads MWSLLLCGLSIALPLSVTA. Ig-like C2-type domains lie at 20–111, 126–211, and 222–318; these read DGCK…VNLT, PNLS…VLNG, and YGGS…MCHA. Topologically, residues 20 to 335 are extracellular; sequence DGCKDIFMKN…ILQLPAPDFR (316 aa). N-linked (GlcNAc...) asparagine glycans are attached at residues asparagine 41, asparagine 59, asparagine 109, asparagine 127, asparagine 184, asparagine 234, asparagine 250, asparagine 266, and asparagine 299. Cysteine 42 and cysteine 95 are oxidised to a cystine. Cysteine 146 and cysteine 195 form a disulfide bridge. An intrachain disulfide couples cysteine 249 to cysteine 316. The chain crosses the membrane as a helical span at residues 336 to 356; it reads AYLIGGLIALVAVAVSVVYIY. Topologically, residues 357–575 are cytoplasmic; sequence NIFKIDIVLW…RRKKCTLTTG (219 aa). The TIR domain maps to 381-536; sequence KLYDAYVLYP…KFWKTVRYHM (156 aa). The active site involves glutamate 467.

This sequence belongs to the interleukin-1 receptor family. In terms of assembly, interacts with IL1RAP; the association is enhanced by IL36B indicative for an functional signaling complex and inhibited by IL36RN. In terms of tissue distribution, expressed in synovial fibroblasts and articular chondrocytes. Expressed in keratinocytes and monocyte-derived dendritic cells. Expressed in monocytes and myeloid dendritic cells; at protein level.

The protein resides in the membrane. It catalyses the reaction NAD(+) + H2O = ADP-D-ribose + nicotinamide + H(+). Its function is as follows. Receptor for interleukin-36 (IL36A, IL36B and IL36G). After binding to interleukin-36 associates with the coreceptor IL1RAP to form the interleukin-36 receptor complex which mediates interleukin-36-dependent activation of NF-kappa-B, MAPK and other pathways. The IL-36 signaling system is thought to be present in epithelial barriers and to take part in local inflammatory response; it is similar to the IL-1 system. Seems to be involved in skin inflammatory response by induction of the IL-23/IL-17/IL-22 pathway. In Homo sapiens (Human), this protein is Interleukin-1 receptor-like 2 (IL1RL2).